Reading from the N-terminus, the 91-residue chain is Large ribosomal subunit protein bL27 (91 aa).

A compositionally biased stretch (polar residues) spans 1-13 (MATKKSGGSSCNG). The tract at residues 1-20 (MATKKSGGSSCNGRDSRGRR) is disordered.

This sequence belongs to the bacterial ribosomal protein bL27 family.

The polypeptide is Large ribosomal subunit protein bL27 (Anaplasma phagocytophilum (strain HZ)).